Consider the following 395-residue polypeptide: S-adenosylmethionine synthase (395 aa).

Histidine 16 lines the ATP pocket. Residue aspartate 18 participates in Mg(2+) binding. Position 44 (glutamate 44) interacts with K(+). The L-methionine site is built by glutamate 57 and glutamine 100. The flexible loop stretch occupies residues 100–110; sequence QSPDIAQGVDR. ATP is bound by residues 167–169, 233–234, aspartate 242, 248–249, alanine 265, and lysine 269; these read DAK, RF, and RK. Aspartate 242 serves as a coordination point for L-methionine. An L-methionine-binding site is contributed by lysine 273.

The protein belongs to the AdoMet synthase family. As to quaternary structure, homotetramer; dimer of dimers. Mg(2+) serves as cofactor. K(+) is required as a cofactor.

It localises to the cytoplasm. The catalysed reaction is L-methionine + ATP + H2O = S-adenosyl-L-methionine + phosphate + diphosphate. It functions in the pathway amino-acid biosynthesis; S-adenosyl-L-methionine biosynthesis; S-adenosyl-L-methionine from L-methionine: step 1/1. In terms of biological role, catalyzes the formation of S-adenosylmethionine (AdoMet) from methionine and ATP. The overall synthetic reaction is composed of two sequential steps, AdoMet formation and the subsequent tripolyphosphate hydrolysis which occurs prior to release of AdoMet from the enzyme. This Burkholderia mallei (strain NCTC 10247) protein is S-adenosylmethionine synthase.